The following is a 417-amino-acid chain: NADH-quinone oxidoreductase subunit D (417 aa).

Belongs to the complex I 49 kDa subunit family. NDH-1 is composed of 14 different subunits. Subunits NuoB, C, D, E, F, and G constitute the peripheral sector of the complex.

It localises to the cell inner membrane. It catalyses the reaction a quinone + NADH + 5 H(+)(in) = a quinol + NAD(+) + 4 H(+)(out). In terms of biological role, NDH-1 shuttles electrons from NADH, via FMN and iron-sulfur (Fe-S) centers, to quinones in the respiratory chain. The immediate electron acceptor for the enzyme in this species is believed to be ubiquinone. Couples the redox reaction to proton translocation (for every two electrons transferred, four hydrogen ions are translocated across the cytoplasmic membrane), and thus conserves the redox energy in a proton gradient. This is NADH-quinone oxidoreductase subunit D from Francisella tularensis subsp. tularensis (strain FSC 198).